The primary structure comprises 209 residues: Mitochondrial import inner membrane translocase subunit Tim23 (209 aa).

The next 3 membrane-spanning stretches (helical) occupy residues 73–93 (FELAFFTIGGCCMSGAAFGAV), 125–145 (ALWANTLGSLALLYSAFGVII), and 180–200 (GGLAGLALTSAFALYNNWEHI).

The protein belongs to the Tim17/Tim22/Tim23 family. In terms of assembly, component of the TIM23 complex at least composed of timm23, timm17 and timm50. The complex interacts with the timm44 component of the PAM complex.

The protein localises to the mitochondrion inner membrane. Essential component of the TIM23 complex, a complex that mediates the translocation of transit peptide-containing proteins across the mitochondrial inner membrane. The protein is Mitochondrial import inner membrane translocase subunit Tim23 (timm23) of Xenopus tropicalis (Western clawed frog).